The chain runs to 101 residues: MAKSSMKAREAKRAKLVAKYAEKRLALKAIISNPTTSDEDRWDAVLKLQGLPRDSSAARQRNRCSQTGRPHGFLRKFGLSRIKLREATMRGEVPGLRKASW.

Belongs to the universal ribosomal protein uS14 family. In terms of assembly, part of the 30S ribosomal subunit. Contacts proteins S3 and S10.

Functionally, binds 16S rRNA, required for the assembly of 30S particles and may also be responsible for determining the conformation of the 16S rRNA at the A site. This Shewanella loihica (strain ATCC BAA-1088 / PV-4) protein is Small ribosomal subunit protein uS14.